The chain runs to 435 residues: Methylenetetrahydrofolate--tRNA-(uracil-5-)-methyltransferase TrmFO (435 aa).

Position 10-15 (10-15 (GAGLAG)) interacts with FAD.

This sequence belongs to the MnmG family. TrmFO subfamily. The cofactor is FAD.

The protein resides in the cytoplasm. The enzyme catalyses uridine(54) in tRNA + (6R)-5,10-methylene-5,6,7,8-tetrahydrofolate + NADH + H(+) = 5-methyluridine(54) in tRNA + (6S)-5,6,7,8-tetrahydrofolate + NAD(+). It catalyses the reaction uridine(54) in tRNA + (6R)-5,10-methylene-5,6,7,8-tetrahydrofolate + NADPH + H(+) = 5-methyluridine(54) in tRNA + (6S)-5,6,7,8-tetrahydrofolate + NADP(+). Its function is as follows. Catalyzes the folate-dependent formation of 5-methyl-uridine at position 54 (M-5-U54) in all tRNAs. This chain is Methylenetetrahydrofolate--tRNA-(uracil-5-)-methyltransferase TrmFO, found in Bacillus velezensis (strain DSM 23117 / BGSC 10A6 / LMG 26770 / FZB42) (Bacillus amyloliquefaciens subsp. plantarum).